We begin with the raw amino-acid sequence, 552 residues long: Capsid protein precursor (552 aa).

Residues 1 to 41 form a disordered region; it reads MKQNDTKKTTQRRNSKKYSSKTNRGTKRAPRDQEVGTGAQE. Residues 9 to 28 are compositionally biased toward basic residues; that stretch reads TTQRRNSKKYSSKTNRGTKR.

As to quaternary structure, homodimer. In terms of processing, the 7 kDa polypeptide is acetylated. Autocatalytic proteolysis releases a post-translationally modified peptide that remains associated with nucleic acid within the virion. This peptide is observed only when nucleic acid is packaged in the capsid.

The protein resides in the virion. Its function is as follows. The capsid protein self-assembles to form an icosahedral capsid with a T=2 symmetry made of 120 subunits. The polypeptide is Capsid protein precursor (Segment-1) (Human picobirnavirus (strain Human/Thailand/Hy005102/-) (PBV)).